A 284-amino-acid chain; its full sequence is Bifunctional protein FolD (284 aa).

NADP(+)-binding positions include 165 to 167 (GRS) and Ser190.

It belongs to the tetrahydrofolate dehydrogenase/cyclohydrolase family. Homodimer.

The catalysed reaction is (6R)-5,10-methylene-5,6,7,8-tetrahydrofolate + NADP(+) = (6R)-5,10-methenyltetrahydrofolate + NADPH. The enzyme catalyses (6R)-5,10-methenyltetrahydrofolate + H2O = (6R)-10-formyltetrahydrofolate + H(+). Its pathway is one-carbon metabolism; tetrahydrofolate interconversion. Its function is as follows. Catalyzes the oxidation of 5,10-methylenetetrahydrofolate to 5,10-methenyltetrahydrofolate and then the hydrolysis of 5,10-methenyltetrahydrofolate to 10-formyltetrahydrofolate. The protein is Bifunctional protein FolD of Streptococcus agalactiae serotype Ia (strain ATCC 27591 / A909 / CDC SS700).